The primary structure comprises 628 residues: Kelch-like protein diablo (628 aa).

A disordered region spans residues 1 to 56 (MGDLPGSTGGGSGPAAAGNASGNASSAGNTGLGVAGTTGVDRPPSPARLSHTSEKH). The segment covering 14 to 29 (PAAAGNASGNASSAGN) has biased composition (low complexity). A BTB domain is found at 74–141 (CDVVLNVGGR…CYTAHIIVEE (68 aa)). In terms of domain architecture, BACK spans 176-278 (CLGIRAFADT…SPKFLVGTVG (103 aa)). Kelch repeat units lie at residues 325 to 371 (VLFA…VLND), 373 to 419 (LYAV…VLDG), 420 to 466 (FLYA…VLGG), 468 to 513 (LYAI…VFNN), 515 to 560 (IYAV…VVNG), and 561 to 607 (QLYA…VMRA).

It participates in protein modification; protein ubiquitination. Its function is as follows. Probable substrate-specific adapter of an E3 ubiquitin-protein ligase complex which mediates the ubiquitination and subsequent proteasomal degradation of target proteins. May have a role in synapse differentiation and growth. This is Kelch-like protein diablo from Drosophila pseudoobscura pseudoobscura (Fruit fly).